Consider the following 547-residue polypeptide: MAAKEVKFGDAGRKKMLAGVNVLADAVKATLGPKGRNVIIEKSFGAPLITKDGVSVAKEIELKDRFENMGAQLVKDVASRANDDAGDGTTTATVLAQAIVNEGLKAVAAGMNPMDLKRGIDKATIAIVAELKKLSKPCTDTKAIAQVGTISANSDHSIGDIIAEAMEKVTKDGVITVEEGSGLENELSVVEGMQFDRGYLSPYFINKPDTMVAELDSPLLLLVDKKISNIREMLPVLEAVAKAGRPLLIVAEDVEGEALATLVVNNMRGIVKVAAVKAPGFGDRRKAMLQDIAVLTGGTVISEEIGLSLETTTLEHLGNAKRVILNKENTTIIDGAGVKTDIDSRISQIRQQIGDTSSDYDKEKLQERLAKLSGGVAVIKVGAGSEVEMKEKKARVEDALHATRAAVEEGVVPGGGVALVRSLQAIEGLKGDNADQDVGIALLRRAVEAPLRQIVANSGDEPSVVVDKVKQGSGNFGYNAASGEYGDMIEMGILDPAKVTRSALQAASSIASLMITTEAMIADVADEKAAGGGMPDMGGMGGMGGMM.

Residues 30–33 (TLGP), Lys-51, 87–91 (DGTTT), Gly-415, 479–481 (NAA), and Asp-495 each bind ATP.

It belongs to the chaperonin (HSP60) family. As to quaternary structure, forms a cylinder of 14 subunits composed of two heptameric rings stacked back-to-back. Interacts with the co-chaperonin GroES.

The protein localises to the cytoplasm. The enzyme catalyses ATP + H2O + a folded polypeptide = ADP + phosphate + an unfolded polypeptide.. Functionally, together with its co-chaperonin GroES, plays an essential role in assisting protein folding. The GroEL-GroES system forms a nano-cage that allows encapsulation of the non-native substrate proteins and provides a physical environment optimized to promote and accelerate protein folding. The polypeptide is Chaperonin GroEL (Pseudomonas syringae pv. tomato (strain ATCC BAA-871 / DC3000)).